The primary structure comprises 148 residues: Putative cyclin-dependent kinase inhibitor SPL2 (148 aa).

Phosphoserine occurs at positions 59 and 86.

The protein resides in the cytoplasmic granule. It localises to the cytoplasm. Functionally, putative cyclin-dependent kinase (CDK) inhibitor necessary and sufficient for PHO pathway-dependent down-regulation of low-affinity phosphate transport. In Saccharomyces cerevisiae (strain YJM789) (Baker's yeast), this protein is Putative cyclin-dependent kinase inhibitor SPL2 (SPL2).